The chain runs to 387 residues: Decapping nuclease RAI1 (387 aa).

Position 172 (E172) interacts with a divalent metal cation. The residue at position 198 (S198) is a Phosphoserine. E221 provides a ligand contact to substrate. D223, E241, and L242 together coordinate a divalent metal cation. The substrate site is built by K243 and Q267. Residues 273–387 (IPRIIYGFKD…GFKEWRKSLK (115 aa)) form an interaction with RAT1 region.

This sequence belongs to the DXO/Dom3Z family. As to quaternary structure, interacts with RAT1, RTT103 and pre-60S ribosomal subunits. Interacts with RAT1; the interaction is direct, stabilizes RAT1 protein structure and stimulates its exoribonuclease activity. The interaction also stimulates RAI1 pyrophosphohydrolase activity, probably by recruiting it to mRNA substrates. A divalent metal cation serves as cofactor.

Its subcellular location is the nucleus. It catalyses the reaction a 5'-end NAD(+)-phospho-ribonucleoside in mRNA + H2O = a 5'-end phospho-ribonucleoside in mRNA + NAD(+) + H(+). It carries out the reaction a 5'-end (N(7)-methyl 5'-triphosphoguanosine)-ribonucleoside-ribonucleotide in mRNA + H2O = a (N(7)-methyl 5'-triphosphoguanosine)-nucleoside + a 5'-end phospho-ribonucleoside in mRNA + H(+). The enzyme catalyses a 5'-end triphospho-ribonucleoside in mRNA + H2O = a 5'-end phospho-ribonucleoside in mRNA + diphosphate + H(+). In terms of biological role, decapping enzyme for NAD-capped RNAs: specifically hydrolyzes the nicotinamide adenine dinucleotide (NAD) cap from a subset of RNAs by removing the entire NAD moiety from the 5'-end of an NAD-capped RNA. The NAD-cap is present at the 5'-end of some RNAs and snoRNAs. In contrast to the canonical 5'-end N7 methylguanosine (m7G) cap, the NAD cap promotes mRNA decay. Also acts as a non-canonical decapping enzyme that removes the entire cap structure of m7G capped or incompletely capped RNAs. Has decapping activity toward incomplete 5'-end m7G cap mRNAs such as unmethylated 5'-end-capped RNA (cap0), while it has no activity toward 2'-O-ribose methylated m7G cap (cap1). Also possesses RNA 5'-pyrophosphohydrolase activity by hydrolyzing the 5'-end triphosphate to release pyrophosphates. Stimulates exoribonuclease activity of RAT1, allowing it to degrade RNAs with stable secondary structure more effectively. Required for the processing of nuclear mRNA and rRNA precursors. May promote termination of transcription by RNA polymerase II. This Saccharomyces cerevisiae (strain ATCC 204508 / S288c) (Baker's yeast) protein is Decapping nuclease RAI1.